We begin with the raw amino-acid sequence, 345 residues long: 3-hydroxy-5-methyl-1-naphthoate 3-O-methyltransferase (345 aa).

Residue Asp-205 coordinates S-adenosyl-L-methionine. The active-site Proton acceptor is His-252.

It belongs to the class I-like SAM-binding methyltransferase superfamily. Cation-independent O-methyltransferase family.

The enzyme catalyses 3-hydroxy-5-methyl-1-naphthoate + S-adenosyl-L-methionine = 3-methoxy-5-methyl-1-naphthoate + S-adenosyl-L-homocysteine + H(+). Its pathway is antibiotic biosynthesis. With respect to regulation, inhibited by different divalent cations, such as Mg(2+), Mn(2+), Fe(2+), Cu(2+) and Zn(2+). O-methyltransferase that mediates the formation of 3-methoxy-5-methyl-1-naphthoate from 3-hydroxy-5-methyl-1-naphthoate in the biosynthesis of the antitumor antibiotic azinomycin B. The protein is 3-hydroxy-5-methyl-1-naphthoate 3-O-methyltransferase of Streptomyces sahachiroi.